The chain runs to 78 residues: Translation initiation factor IF-1 (78 aa).

One can recognise an S1-like domain in the interval 4–78 (KFNNQAKQDK…LKLGRIIGRK (75 aa)).

The protein belongs to the IF-1 family. Component of the 30S ribosomal translation pre-initiation complex which assembles on the 30S ribosome in the order IF-2 and IF-3, IF-1 and N-formylmethionyl-tRNA(fMet); mRNA recruitment can occur at any time during PIC assembly.

The protein localises to the cytoplasm. Its function is as follows. One of the essential components for the initiation of protein synthesis. Stabilizes the binding of IF-2 and IF-3 on the 30S subunit to which N-formylmethionyl-tRNA(fMet) subsequently binds. Helps modulate mRNA selection, yielding the 30S pre-initiation complex (PIC). Upon addition of the 50S ribosomal subunit IF-1, IF-2 and IF-3 are released leaving the mature 70S translation initiation complex. This is Translation initiation factor IF-1 from Mycoplasma pneumoniae (strain ATCC 29342 / M129 / Subtype 1) (Mycoplasmoides pneumoniae).